We begin with the raw amino-acid sequence, 298 residues long: Probable endonuclease 4 (298 aa).

Residues H69, H111, E146, D180, H183, H215, D228, H230, and E260 each contribute to the Zn(2+) site.

Belongs to the AP endonuclease 2 family. The cofactor is Zn(2+).

It catalyses the reaction Endonucleolytic cleavage to 5'-phosphooligonucleotide end-products.. In terms of biological role, endonuclease IV plays a role in DNA repair. It cleaves phosphodiester bonds at apurinic or apyrimidinic (AP) sites, generating a 3'-hydroxyl group and a 5'-terminal sugar phosphate. The polypeptide is Probable endonuclease 4 (Bacillus cereus (strain AH187)).